Reading from the N-terminus, the 100-residue chain is Integration host factor subunit alpha (100 aa).

It belongs to the bacterial histone-like protein family. In terms of assembly, heterodimer of an alpha and a beta chain.

Functionally, this protein is one of the two subunits of integration host factor, a specific DNA-binding protein that functions in genetic recombination as well as in transcriptional and translational control. This chain is Integration host factor subunit alpha (ihfA), found in Zymomonas mobilis subsp. mobilis (strain ATCC 31821 / ZM4 / CP4).